We begin with the raw amino-acid sequence, 177 residues long: Eggshell protein (177 aa).

The first 18 residues, 1–18 (MKQSLTLVFLVAIGYATA), serve as a signal peptide directing secretion. Tandem repeats lie at residues 25-41 (YSGG…CDSG), 42-59 (YGDS…CGGG), 60-75 (YGGG…DCGN), 76-91 (YGGG…DCGN), and 92-112 (YGGG…CGGG). Positions 25-112 (YSGGYGGGCY…GCSGGNCGGG (88 aa)) are 5 X approximate tandem repeats. Gly residues predominate over residues 149–166 (GSGKGKGGGKGGKGGKGG). Residues 149 to 177 (GSGKGKGGGKGGKGGKGGTYKPSHYGGGY) form a disordered region.

In Schistosoma mansoni (Blood fluke), this protein is Eggshell protein (F10).